Here is a 185-residue protein sequence, read N- to C-terminus: Phospholipase A2 inhibitor 25 kDa subunit (185 aa).

Intrachain disulfides connect C3–C27, C6–C13, C20–C48, C54–C75, C76–C81, C101–C126, C119–C146, and C152–C172.

The protein belongs to the CNF-like-inhibitor family. As to quaternary structure, heterodimer with phospholipase A2 inhibitor 31 kDa. In terms of tissue distribution, expressed by the liver.

The protein resides in the secreted. Functionally, inhibits the enzymatic activity of phospholipase A2. This Naja kaouthia (Monocled cobra) protein is Phospholipase A2 inhibitor 25 kDa subunit.